The chain runs to 425 residues: Glutamyl-tRNA reductase (425 aa).

Substrate is bound by residues 49–52, serine 107, 112–114, and glutamine 118; these read TCNR and EPQ. Residue cysteine 50 is the Nucleophile of the active site. 187-192 lines the NADP(+) pocket; sequence GAGETI.

This sequence belongs to the glutamyl-tRNA reductase family. As to quaternary structure, homodimer.

The enzyme catalyses (S)-4-amino-5-oxopentanoate + tRNA(Glu) + NADP(+) = L-glutamyl-tRNA(Glu) + NADPH + H(+). The protein operates within porphyrin-containing compound metabolism; protoporphyrin-IX biosynthesis; 5-aminolevulinate from L-glutamyl-tRNA(Glu): step 1/2. Functionally, catalyzes the NADPH-dependent reduction of glutamyl-tRNA(Glu) to glutamate 1-semialdehyde (GSA). The protein is Glutamyl-tRNA reductase of Pseudomonas putida (strain W619).